Here is a 578-residue protein sequence, read N- to C-terminus: Arginine--tRNA ligase (578 aa).

The short motif at 122–132 (PNLAKEMHVGH) is the 'HIGH' region element.

This sequence belongs to the class-I aminoacyl-tRNA synthetase family. In terms of assembly, monomer.

It localises to the cytoplasm. It carries out the reaction tRNA(Arg) + L-arginine + ATP = L-arginyl-tRNA(Arg) + AMP + diphosphate. The polypeptide is Arginine--tRNA ligase (Pseudoalteromonas atlantica (strain T6c / ATCC BAA-1087)).